The sequence spans 385 residues: Zinc finger protein B385R (385 aa).

2 consecutive C2H2-type zinc fingers follow at residues 166 to 190 (LQCP…FYNH) and 168 to 190 (CPNC…FYNH).

The protein belongs to the asfivirus B385R family.

The protein is Zinc finger protein B385R of African swine fever virus (isolate Tick/Malawi/Lil 20-1/1983) (ASFV).